The sequence spans 217 residues: Probable transaldolase (217 aa).

The Schiff-base intermediate with substrate role is filled by Lys-83.

Belongs to the transaldolase family. Type 3B subfamily.

It localises to the cytoplasm. The enzyme catalyses D-sedoheptulose 7-phosphate + D-glyceraldehyde 3-phosphate = D-erythrose 4-phosphate + beta-D-fructose 6-phosphate. Its pathway is carbohydrate degradation; pentose phosphate pathway; D-glyceraldehyde 3-phosphate and beta-D-fructose 6-phosphate from D-ribose 5-phosphate and D-xylulose 5-phosphate (non-oxidative stage): step 2/3. Transaldolase is important for the balance of metabolites in the pentose-phosphate pathway. The sequence is that of Probable transaldolase from Novosphingobium aromaticivorans (strain ATCC 700278 / DSM 12444 / CCUG 56034 / CIP 105152 / NBRC 16084 / F199).